A 202-amino-acid chain; its full sequence is NADH-quinone oxidoreductase subunit C (202 aa).

The protein belongs to the complex I 30 kDa subunit family. NDH-1 is composed of 14 different subunits. Subunits NuoB, C, D, E, F, and G constitute the peripheral sector of the complex.

The protein resides in the cell inner membrane. The catalysed reaction is a quinone + NADH + 5 H(+)(in) = a quinol + NAD(+) + 4 H(+)(out). Functionally, NDH-1 shuttles electrons from NADH, via FMN and iron-sulfur (Fe-S) centers, to quinones in the respiratory chain. The immediate electron acceptor for the enzyme in this species is believed to be ubiquinone. Couples the redox reaction to proton translocation (for every two electrons transferred, four hydrogen ions are translocated across the cytoplasmic membrane), and thus conserves the redox energy in a proton gradient. In Brucella abortus (strain 2308), this protein is NADH-quinone oxidoreductase subunit C.